The chain runs to 380 residues: Queuine tRNA-ribosyltransferase (380 aa).

The Proton acceptor role is filled by Asp-96. Substrate-binding positions include 96 to 100 (DSGGF), Asp-150, Gln-193, and Gly-220. The interval 251–257 (GVGAPDS) is RNA binding. The Nucleophile role is filled by Asp-270. Residues 275–279 (TRIAR) form an RNA binding; important for wobble base 34 recognition region. Positions 308, 310, 313, and 339 each coordinate Zn(2+).

It belongs to the queuine tRNA-ribosyltransferase family. As to quaternary structure, homodimer. Within each dimer, one monomer is responsible for RNA recognition and catalysis, while the other monomer binds to the replacement base PreQ1. Zn(2+) is required as a cofactor.

The enzyme catalyses 7-aminomethyl-7-carbaguanine + guanosine(34) in tRNA = 7-aminomethyl-7-carbaguanosine(34) in tRNA + guanine. It functions in the pathway tRNA modification; tRNA-queuosine biosynthesis. Catalyzes the base-exchange of a guanine (G) residue with the queuine precursor 7-aminomethyl-7-deazaguanine (PreQ1) at position 34 (anticodon wobble position) in tRNAs with GU(N) anticodons (tRNA-Asp, -Asn, -His and -Tyr). Catalysis occurs through a double-displacement mechanism. The nucleophile active site attacks the C1' of nucleotide 34 to detach the guanine base from the RNA, forming a covalent enzyme-RNA intermediate. The proton acceptor active site deprotonates the incoming PreQ1, allowing a nucleophilic attack on the C1' of the ribose to form the product. After dissociation, two additional enzymatic reactions on the tRNA convert PreQ1 to queuine (Q), resulting in the hypermodified nucleoside queuosine (7-(((4,5-cis-dihydroxy-2-cyclopenten-1-yl)amino)methyl)-7-deazaguanosine). The protein is Queuine tRNA-ribosyltransferase of Streptococcus thermophilus (strain ATCC BAA-491 / LMD-9).